A 122-amino-acid polypeptide reads, in one-letter code: Large ribosomal subunit protein uL14 (122 aa).

Belongs to the universal ribosomal protein uL14 family. Part of the 50S ribosomal subunit. Forms a cluster with proteins L3 and L19. In the 70S ribosome, L14 and L19 interact and together make contacts with the 16S rRNA in bridges B5 and B8.

Functionally, binds to 23S rRNA. Forms part of two intersubunit bridges in the 70S ribosome. The chain is Large ribosomal subunit protein uL14 from Baumannia cicadellinicola subsp. Homalodisca coagulata.